The sequence spans 448 residues: Biotin carboxylase (448 aa).

Residues 1 to 445 (MLEKVVIANR…NIHYLEKKLG (445 aa)) form the Biotin carboxylation domain. ATP contacts are provided by residues K116, K159, 165–166 (GG), 201–204 (EKYL), H209, and H236. An ATP-grasp domain is found at 120 to 317 (IKAMKKAGVP…LVKEQLRIAA (198 aa)). K238 lines the hydrogencarbonate pocket. ATP-binding residues include E276 and E288. Positions 276, 288, and 290 each coordinate Mg(2+). The Mn(2+) site is built by E276, E288, and N290. Hydrogencarbonate is bound by residues R292, V295, and R338. R292 is an active-site residue. Position 338 (R338) interacts with biotin.

In terms of assembly, acetyl-CoA carboxylase is a heterohexamer of biotin carboxyl carrier protein, biotin carboxylase and the two subunits of carboxyl transferase in a 2:2 complex. Mg(2+) serves as cofactor. Mn(2+) is required as a cofactor.

The enzyme catalyses N(6)-biotinyl-L-lysyl-[protein] + hydrogencarbonate + ATP = N(6)-carboxybiotinyl-L-lysyl-[protein] + ADP + phosphate + H(+). The protein operates within lipid metabolism; malonyl-CoA biosynthesis; malonyl-CoA from acetyl-CoA: step 1/1. Its function is as follows. This protein is a component of the acetyl coenzyme A carboxylase complex; first, biotin carboxylase catalyzes the carboxylation of the carrier protein and then the transcarboxylase transfers the carboxyl group to form malonyl-CoA. The chain is Biotin carboxylase (accC) from Haemophilus influenzae (strain ATCC 51907 / DSM 11121 / KW20 / Rd).